The chain runs to 128 residues: Iron-sulfur cluster insertion protein ErpA (128 aa).

Positions 56, 120, and 122 each coordinate iron-sulfur cluster.

Belongs to the HesB/IscA family. In terms of assembly, homodimer. Iron-sulfur cluster serves as cofactor.

Functionally, required for insertion of 4Fe-4S clusters for at least IspG. This Xanthomonas campestris pv. campestris (strain 8004) protein is Iron-sulfur cluster insertion protein ErpA.